A 301-amino-acid polypeptide reads, in one-letter code: UDP-N-acetylenolpyruvoylglucosamine reductase 1 (301 aa).

Positions 29 to 196 (KIGGPADILI…LEAEFQLQIG (168 aa)) constitute an FAD-binding PCMH-type domain. The active site involves Arg-174. Ser-225 acts as the Proton donor in catalysis. The active site involves Glu-295.

The protein belongs to the MurB family. The cofactor is FAD.

It is found in the cytoplasm. It carries out the reaction UDP-N-acetyl-alpha-D-muramate + NADP(+) = UDP-N-acetyl-3-O-(1-carboxyvinyl)-alpha-D-glucosamine + NADPH + H(+). It participates in cell wall biogenesis; peptidoglycan biosynthesis. Cell wall formation. The protein is UDP-N-acetylenolpyruvoylglucosamine reductase 1 of Bacillus thuringiensis subsp. konkukian (strain 97-27).